Reading from the N-terminus, the 608-residue chain is UvrABC system protein C (608 aa).

The GIY-YIG domain maps to 13-91 (HKPGVYIMHD…IKKNSPKYNI (79 aa)). The UVR domain occupies 202–237 (DELTKKLTDKMMAASKNLNFELAAKLRDSITNIQVI).

This sequence belongs to the UvrC family. In terms of assembly, interacts with UvrB in an incision complex.

It is found in the cytoplasm. The UvrABC repair system catalyzes the recognition and processing of DNA lesions. UvrC both incises the 5' and 3' sides of the lesion. The N-terminal half is responsible for the 3' incision and the C-terminal half is responsible for the 5' incision. The chain is UvrABC system protein C from Finegoldia magna (strain ATCC 29328 / DSM 20472 / WAL 2508) (Peptostreptococcus magnus).